Here is a 476-residue protein sequence, read N- to C-terminus: UDP-N-acetylmuramate--L-alanine ligase (476 aa).

ATP is bound at residue 121–127 (GAHGKTT).

Belongs to the MurCDEF family.

It localises to the cytoplasm. The catalysed reaction is UDP-N-acetyl-alpha-D-muramate + L-alanine + ATP = UDP-N-acetyl-alpha-D-muramoyl-L-alanine + ADP + phosphate + H(+). The protein operates within cell wall biogenesis; peptidoglycan biosynthesis. Its function is as follows. Cell wall formation. In Clavibacter michiganensis subsp. michiganensis (strain NCPPB 382), this protein is UDP-N-acetylmuramate--L-alanine ligase.